Here is a 102-residue protein sequence, read N- to C-terminus: Large ribosomal subunit protein bL21 (102 aa).

Residues 79–91 show a composition bias toward basic residues; that stretch reads RKDSKRKKGHRQP. A disordered region spans residues 79–102; the sequence is RKDSKRKKGHRQPYTKLTIDKINA.

This sequence belongs to the bacterial ribosomal protein bL21 family. Part of the 50S ribosomal subunit. Contacts protein L20.

Functionally, this protein binds to 23S rRNA in the presence of protein L20. This chain is Large ribosomal subunit protein bL21, found in Staphylococcus carnosus (strain TM300).